The primary structure comprises 357 residues: Phosphoribosylformylglycinamidine cyclo-ligase (357 aa).

It belongs to the AIR synthase family.

It localises to the cytoplasm. It catalyses the reaction 2-formamido-N(1)-(5-O-phospho-beta-D-ribosyl)acetamidine + ATP = 5-amino-1-(5-phospho-beta-D-ribosyl)imidazole + ADP + phosphate + H(+). The protein operates within purine metabolism; IMP biosynthesis via de novo pathway; 5-amino-1-(5-phospho-D-ribosyl)imidazole from N(2)-formyl-N(1)-(5-phospho-D-ribosyl)glycinamide: step 2/2. The protein is Phosphoribosylformylglycinamidine cyclo-ligase of Rhodopseudomonas palustris (strain ATCC BAA-98 / CGA009).